Here is a 436-residue protein sequence, read N- to C-terminus: Na(+)/H(+) antiporter NhaA 1 (436 aa).

A run of 11 helical transmembrane segments spans residues 35 to 55 (FGGG…NSPW), 80 to 100 (LATW…GLEL), 116 to 136 (ALPV…YVGV), 147 to 167 (GWAI…AVIG), 176 to 196 (AFLL…IAIF), 201 to 221 (FKLT…LLVQ), 226 to 246 (WWWA…ESGV), 283 to 303 (VSAG…SLRG), 313 to 333 (PIVV…IFGS), 354 to 374 (LLGV…IGEL), and 385 to 405 (VKAA…IVLI).

It belongs to the NhaA Na(+)/H(+) (TC 2.A.33) antiporter family.

Its subcellular location is the cell membrane. The catalysed reaction is Na(+)(in) + 2 H(+)(out) = Na(+)(out) + 2 H(+)(in). Its function is as follows. Na(+)/H(+) antiporter that extrudes sodium in exchange for external protons. The polypeptide is Na(+)/H(+) antiporter NhaA 1 (Salinispora tropica (strain ATCC BAA-916 / DSM 44818 / JCM 13857 / NBRC 105044 / CNB-440)).